The chain runs to 275 residues: Large ribosomal subunit protein uL2 (275 aa).

The disordered stretch occupies residues 221–275 (RGMTMNPVDHPMGGGEGRSKGHIPQSPWGIPAKGYKTRKSKKPSDKLIVKRRKQK).

Belongs to the universal ribosomal protein uL2 family. Part of the 50S ribosomal subunit. Forms a bridge to the 30S subunit in the 70S ribosome.

In terms of biological role, one of the primary rRNA binding proteins. Required for association of the 30S and 50S subunits to form the 70S ribosome, for tRNA binding and peptide bond formation. It has been suggested to have peptidyltransferase activity; this is somewhat controversial. Makes several contacts with the 16S rRNA in the 70S ribosome. This is Large ribosomal subunit protein uL2 from Kosmotoga olearia (strain ATCC BAA-1733 / DSM 21960 / TBF 19.5.1).